Reading from the N-terminus, the 280-residue chain is Type II restriction enzyme MboI (280 aa).

This sequence belongs to the DpnII type II restriction endonuclease family.

It carries out the reaction Endonucleolytic cleavage of DNA to give specific double-stranded fragments with terminal 5'-phosphates.. A P subtype restriction enzyme that recognizes the double-stranded unmethylated sequence 5'-GATC-3' and cleaves before G-1. This Moraxella bovis protein is Type II restriction enzyme MboI (mboIR).